The chain runs to 584 residues: DNA ligase (584 aa).

E249 provides a ligand contact to ATP. The active-site N6-AMP-lysine intermediate is K251. ATP-binding residues include R256, R271, E301, F341, R416, and K422.

The protein belongs to the ATP-dependent DNA ligase family. The cofactor is Mg(2+).

The enzyme catalyses ATP + (deoxyribonucleotide)n-3'-hydroxyl + 5'-phospho-(deoxyribonucleotide)m = (deoxyribonucleotide)n+m + AMP + diphosphate.. Its function is as follows. DNA ligase that seals nicks in double-stranded DNA during DNA replication, DNA recombination and DNA repair. In Pyrobaculum arsenaticum (strain DSM 13514 / JCM 11321 / PZ6), this protein is DNA ligase.